Reading from the N-terminus, the 144-residue chain is Large ribosomal subunit protein uL16 (144 aa).

The protein belongs to the universal ribosomal protein uL16 family. As to quaternary structure, part of the 50S ribosomal subunit.

Binds 23S rRNA and is also seen to make contacts with the A and possibly P site tRNAs. The chain is Large ribosomal subunit protein uL16 from Novosphingobium aromaticivorans (strain ATCC 700278 / DSM 12444 / CCUG 56034 / CIP 105152 / NBRC 16084 / F199).